We begin with the raw amino-acid sequence, 277 residues long: Formamidopyrimidine-DNA glycosylase (277 aa).

Pro-2 functions as the Schiff-base intermediate with DNA in the catalytic mechanism. Catalysis depends on Glu-3, which acts as the Proton donor. Lys-60 (proton donor; for beta-elimination activity) is an active-site residue. DNA-binding residues include His-94, Arg-113, and Arg-158. An FPG-type zinc finger spans residues 243-277 (WVYNRAGEPCKVCGDVIQRIKLGGRSSHFCRQCQV). Arg-267 acts as the Proton donor; for delta-elimination activity in catalysis.

This sequence belongs to the FPG family. As to quaternary structure, monomer. Requires Zn(2+) as cofactor.

It carries out the reaction Hydrolysis of DNA containing ring-opened 7-methylguanine residues, releasing 2,6-diamino-4-hydroxy-5-(N-methyl)formamidopyrimidine.. The catalysed reaction is 2'-deoxyribonucleotide-(2'-deoxyribose 5'-phosphate)-2'-deoxyribonucleotide-DNA = a 3'-end 2'-deoxyribonucleotide-(2,3-dehydro-2,3-deoxyribose 5'-phosphate)-DNA + a 5'-end 5'-phospho-2'-deoxyribonucleoside-DNA + H(+). Functionally, involved in base excision repair of DNA damaged by oxidation or by mutagenic agents. Acts as a DNA glycosylase that recognizes and removes damaged bases. Has a preference for oxidized purines, such as 7,8-dihydro-8-oxoguanine (8-oxoG). Has AP (apurinic/apyrimidinic) lyase activity and introduces nicks in the DNA strand. Cleaves the DNA backbone by beta-delta elimination to generate a single-strand break at the site of the removed base with both 3'- and 5'-phosphates. This is Formamidopyrimidine-DNA glycosylase from Trichormus variabilis (strain ATCC 29413 / PCC 7937) (Anabaena variabilis).